The following is a 97-amino-acid chain: Signal recognition particle 19 kDa protein (97 aa).

This sequence belongs to the SRP19 family. In terms of assembly, part of the signal recognition particle protein translocation system, which is composed of SRP and FtsY. Archaeal SRP consists of a 7S RNA molecule of 300 nucleotides and two protein subunits: SRP54 and SRP19.

It localises to the cytoplasm. Functionally, involved in targeting and insertion of nascent membrane proteins into the cytoplasmic membrane. Binds directly to 7S RNA and mediates binding of the 54 kDa subunit of the SRP. The polypeptide is Signal recognition particle 19 kDa protein (Methanocella arvoryzae (strain DSM 22066 / NBRC 105507 / MRE50)).